The following is a 386-amino-acid chain: Patatin-2-Kuras 2 (386 aa).

A signal peptide spans M1–A23. Positions L32–L229 constitute a PNPLA domain. Residues G36–G41 carry the GXGXXG motif. A GXSXG motif is present at residues G75 to G79. S77 (nucleophile) is an active-site residue. N-linked (GlcNAc...) asparagine glycosylation occurs at N115. D215 serves as the catalytic Proton acceptor. The DGA/G signature appears at D215–A217. Residues E321–A384 are a coiled coil.

This sequence belongs to the patatin family.

The protein localises to the vacuole. Probable lipolytic acyl hydrolase (LAH), an activity which is thought to be involved in the response of tubers to pathogens. This is Patatin-2-Kuras 2 (pat2-k2) from Solanum tuberosum (Potato).